The chain runs to 883 residues: Bifunctional heparan sulfate N-deacetylase/N-sulfotransferase 2 (883 aa).

Residues 1–18 (MLQLWKVVRPARQLELHR) lie on the Cytoplasmic side of the membrane. A helical; Signal-anchor for type II membrane protein membrane pass occupies residues 19–39 (LILLLIGFSLVSMGFLAYYVS). Residues 40 to 883 (TSPKAKEPLP…REELQHSSVG (844 aa)) are Lumenal-facing. The interval 41-597 (SPKAKEPLPL…KRHKDIWSKE (557 aa)) is heparan sulfate N-deacetylase 2. Residues 49-82 (PLPLGDCSSSGAAGPGPARPPVPPRPQRPPETTR) are disordered. Pro residues predominate over residues 65-77 (PARPPVPPRPQRP). N-linked (GlcNAc...) asparagine glycosylation is found at Asn-233, Asn-350, and Asn-400. Positions 598–883 (KTCDRLPKFL…REELQHSSVG (286 aa)) are heparan sulfate N-sulfotransferase 2. Lys-613 acts as the For sulfotransferase activity in catalysis. Position 613-617 (613-617 (KTGTT)) interacts with 3'-phosphoadenylyl sulfate. A glycan (N-linked (GlcNAc...) asparagine) is linked at Asn-666. Ser-711 provides a ligand contact to 3'-phosphoadenylyl sulfate. Asn-726 and Asn-802 each carry an N-linked (GlcNAc...) asparagine glycan. Residues Cys-817 and Cys-827 are joined by a disulfide bond. 832-836 (KGRRY) lines the 3'-phosphoadenylyl sulfate pocket.

Belongs to the sulfotransferase 1 family. NDST subfamily. As to quaternary structure, monomer. In terms of tissue distribution, widely expressed in adult and throughout development.

The protein localises to the golgi apparatus membrane. The enzyme catalyses alpha-D-glucosaminyl-[heparan sulfate](n) + 3'-phosphoadenylyl sulfate = N-sulfo-alpha-D-glucosaminyl-[heparan sulfate](n) + adenosine 3',5'-bisphosphate + 2 H(+). It functions in the pathway glycan metabolism; heparan sulfate biosynthesis. Its pathway is glycan metabolism; heparin biosynthesis. Essential bifunctional enzyme that catalyzes both the N-deacetylation and the N-sulfation of glucosamine (GlcNAc) of the glycosaminoglycan in heparan sulfate. Modifies the GlcNAc-GlcA disaccharide repeating sugar backbone to make N-sulfated heparosan, a prerequisite substrate for later modifications in heparin biosynthesis. Plays a role in determining the extent and pattern of sulfation of heparan sulfate. Required for the exosomal release of SDCBP, CD63 and syndecan. The chain is Bifunctional heparan sulfate N-deacetylase/N-sulfotransferase 2 (Ndst2) from Mus musculus (Mouse).